Here is a 585-residue protein sequence, read N- to C-terminus: Auxin response factor 17 (585 aa).

The segment at residues F119–P221 is a DNA-binding region (TF-B3). Disordered stretches follow at residues E483–L517 and E535–G585. A compositionally biased stretch (low complexity) spans G488–L510. Residues K573–G585 show a composition bias toward polar residues.

Belongs to the ARF family. Homo and heterodimers.

It is found in the nucleus. Its function is as follows. Auxin response factors (ARFs) are transcriptional factors that bind specifically to the DNA sequence 5'-TGTCTC-3' found in the auxin-responsive promoter elements (AuxREs). Could act as transcriptional activator or repressor. Formation of heterodimers with Aux/IAA proteins may alter their ability to modulate early auxin response genes expression. The chain is Auxin response factor 17 (ARF17) from Arabidopsis thaliana (Mouse-ear cress).